The following is a 344-amino-acid chain: 3-dehydroquinate synthase (344 aa).

NAD(+) is bound by residues Asp-60–Lys-65, Gly-94–Asp-98, Thr-118–Thr-119, Lys-131, Lys-140, and Phe-158–Thr-161. Residues Glu-173, His-232, and His-249 each coordinate Zn(2+).

Belongs to the sugar phosphate cyclases superfamily. Dehydroquinate synthase family. Co(2+) serves as cofactor. The cofactor is Zn(2+). Requires NAD(+) as cofactor.

It is found in the cytoplasm. It catalyses the reaction 7-phospho-2-dehydro-3-deoxy-D-arabino-heptonate = 3-dehydroquinate + phosphate. It functions in the pathway metabolic intermediate biosynthesis; chorismate biosynthesis; chorismate from D-erythrose 4-phosphate and phosphoenolpyruvate: step 2/7. In terms of biological role, catalyzes the conversion of 3-deoxy-D-arabino-heptulosonate 7-phosphate (DAHP) to dehydroquinate (DHQ). This Campylobacter hominis (strain ATCC BAA-381 / DSM 21671 / CCUG 45161 / LMG 19568 / NCTC 13146 / CH001A) protein is 3-dehydroquinate synthase.